The sequence spans 212 residues: Dephospho-CoA kinase (212 aa).

Residues 3–204 (ILGLTGSIGM…GSRPAAPVGG (202 aa)) enclose the DPCK domain. An ATP-binding site is contributed by 11-16 (GMGKST).

Belongs to the CoaE family.

The protein localises to the cytoplasm. The catalysed reaction is 3'-dephospho-CoA + ATP = ADP + CoA + H(+). The protein operates within cofactor biosynthesis; coenzyme A biosynthesis; CoA from (R)-pantothenate: step 5/5. Functionally, catalyzes the phosphorylation of the 3'-hydroxyl group of dephosphocoenzyme A to form coenzyme A. The protein is Dephospho-CoA kinase of Paramagnetospirillum magneticum (strain ATCC 700264 / AMB-1) (Magnetospirillum magneticum).